The primary structure comprises 865 residues: V-type proton ATPase 116 kDa subunit a 3 (865 aa).

The Cytoplasmic portion of the chain corresponds to 1–409; that stretch reads MGSIYRSEHM…VNPAPWTIIS (409 aa). Residues 51–121 adopt a coiled-coil conformation; the sequence is FVNEVRRCDE…NKNCKVLKNN (71 aa). The chain crosses the membrane as a helical span at residues 410 to 430; it reads FPFLFAVMFGDAGHGIIMLIA. Residues 431-453 are Extracellular-facing; sequence ASAFVIFEKKLISMKIKDEIFNT. A helical membrane pass occupies residues 454–474; the sequence is FFGGRYVVLLMGMFAIYTGFI. Residues 475–556 are Cytoplasmic-facing; it reads YNDFYSKSVN…FLNPMKMKTS (82 aa). Residues 557–577 form a helical membrane-spanning segment; the sequence is ILLGISQMAFGIMLSLMNHIG. N-linked (GlcNAc...) asparagine glycosylation is present at Asn-578. The Extracellular segment spans residues 578–583; it reads NRSVVD. Residues 584-604 traverse the membrane as a helical segment; that stretch reads IVFVFIPQCLFLGCIFVYLCL. The Cytoplasmic portion of the chain corresponds to 605 to 623; sequence QVLMKWIFFYVKPAYIFGR. The chain crosses the membrane as a helical span at residues 624–644; the sequence is LYPGSNCAPSLLIGLINMFMV. Topologically, residues 645 to 688 are extracellular; that stretch reads KSRDASFAHDVGTAAGKEWVIVNGQNVTYTINDQCYLQQWYPNQ. Asn-670 and Asn-687 each carry an N-linked (GlcNAc...) asparagine glycan. Residues 689-709 traverse the membrane as a helical segment; it reads SLVELILLLIAVVSVPVMLLV. Residues 710-798 lie on the Cytoplasmic side of the membrane; that stretch reads KPFYIRWRHS…LTMGGWGGSA (89 aa). A helical membrane pass occupies residues 799 to 819; the sequence is AITILFYFIFSILSVCILILM. Residues 820 to 865 lie on the Extracellular side of the membrane; sequence EGLSAFLHAIRLHWVEFQSKFYGGTGIQFEPFCFTKIIRVYEGLDQ.

It belongs to the V-ATPase 116 kDa subunit family. In terms of assembly, V-ATPase is a heteromultimeric enzyme made up of two complexes: the ATP-hydrolytic V1 complex and the proton translocation V0 complex. The V1 complex consists of three catalytic AB heterodimers that form a heterohexamer, three peripheral stalks each consisting of EG heterodimers, one central rotor including subunits D and F, and the regulatory subunits C and H. The proton translocation complex V0 consists of the proton transport subunit a, a ring of proteolipid subunits c9c'', rotary subunit d, subunits e and f, and the accessory subunits vah-19/Ac45 and vah-20/PRR. Interacts with V-type proton ATPase subunit C vha-11.

Its subcellular location is the apical cell membrane. In terms of biological role, subunit of the V0 complex of vacuolar(H+)-ATPase (V-ATPase), a multisubunit enzyme composed of a peripheral complex (V1) that hydrolyzes ATP and a membrane integral complex (V0) that translocates protons. V-ATPase is responsible for acidifying and maintaining the pH of intracellular compartments and in some cell types, is targeted to the plasma membrane, where it is responsible for acidifying the extracellular environment. In the intestine, required for the rhythmic defecation behavior by promoting acidification in the gut lumen following defecation. Also, luminal acidification is required for nutrient uptake. The protein is V-type proton ATPase 116 kDa subunit a 3 of Caenorhabditis elegans.